The following is a 345-amino-acid chain: Phenylalanine--tRNA ligase alpha subunit (345 aa).

Glu-272 is a Mg(2+) binding site.

Belongs to the class-II aminoacyl-tRNA synthetase family. Phe-tRNA synthetase alpha subunit type 1 subfamily. In terms of assembly, tetramer of two alpha and two beta subunits. It depends on Mg(2+) as a cofactor.

It localises to the cytoplasm. The enzyme catalyses tRNA(Phe) + L-phenylalanine + ATP = L-phenylalanyl-tRNA(Phe) + AMP + diphosphate + H(+). In Prochlorococcus marinus (strain MIT 9312), this protein is Phenylalanine--tRNA ligase alpha subunit.